The primary structure comprises 156 residues: Ribosome maturation factor RimP (156 aa).

It belongs to the RimP family.

It localises to the cytoplasm. Required for maturation of 30S ribosomal subunits. The sequence is that of Ribosome maturation factor RimP from Gloeobacter violaceus (strain ATCC 29082 / PCC 7421).